The following is a 485-amino-acid chain: tRNA sulfurtransferase (485 aa).

In terms of domain architecture, THUMP spans 63–167; the sequence is DKLVERLSCM…NELLYLVTAI (105 aa). ATP contacts are provided by residues 185 to 186, Lys267, Gly289, and Gln298; that span reads LI. Cys346 and Cys458 are joined by a disulfide. The 80-residue stretch at 406-485 folds into the Rhodanese domain; sequence LAENEVILDI…FNNIKVYRQN (80 aa). The active-site Cysteine persulfide intermediate is Cys458.

Belongs to the ThiI family.

The protein localises to the cytoplasm. The enzyme catalyses [ThiI sulfur-carrier protein]-S-sulfanyl-L-cysteine + a uridine in tRNA + 2 reduced [2Fe-2S]-[ferredoxin] + ATP + H(+) = [ThiI sulfur-carrier protein]-L-cysteine + a 4-thiouridine in tRNA + 2 oxidized [2Fe-2S]-[ferredoxin] + AMP + diphosphate. The catalysed reaction is [ThiS sulfur-carrier protein]-C-terminal Gly-Gly-AMP + S-sulfanyl-L-cysteinyl-[cysteine desulfurase] + AH2 = [ThiS sulfur-carrier protein]-C-terminal-Gly-aminoethanethioate + L-cysteinyl-[cysteine desulfurase] + A + AMP + 2 H(+). It functions in the pathway cofactor biosynthesis; thiamine diphosphate biosynthesis. Functionally, catalyzes the ATP-dependent transfer of a sulfur to tRNA to produce 4-thiouridine in position 8 of tRNAs, which functions as a near-UV photosensor. Also catalyzes the transfer of sulfur to the sulfur carrier protein ThiS, forming ThiS-thiocarboxylate. This is a step in the synthesis of thiazole, in the thiamine biosynthesis pathway. The sulfur is donated as persulfide by IscS. The sequence is that of tRNA sulfurtransferase from Tolumonas auensis (strain DSM 9187 / NBRC 110442 / TA 4).